The following is a 30-amino-acid chain: Peptidase 1 (30 aa).

It belongs to the peptidase C1 family.

Its subcellular location is the secreted. The enzyme catalyses Broad endopeptidase specificity.. Functionally, thiol protease that hydrolyzes proteins, with a preference for Phe or basic residues. This chain is Peptidase 1 (DERM1), found in Dermatophagoides microceras (House dust mite).